The following is a 431-amino-acid chain: MSDTLRVAGGAVLHPDFTVSDGDVLVDRDAGEIIAVGDTPAGDETVDAAGCLVMPGLVNAHCHVAMTLLRGYADDKQLDAWLQEDIWPAEAELADGDIRAGARLGLVEMIRAGTTAFADMYFEVPEVVDAITEAGLRARVGHGVVTVGKDDADAVADNEEALSVAREFNDAADGRITSAYMPHSLTTVGEEYLREFVAAAREADVPVHFHANETEQEVEPIVDEHGSRPLEYAADVGLLAEDDFLAHGVHTTAGEIELLAESGASVVHCPASNMKLASGMAPVQAMREAGVTVALGTDGAASNNDLDVFDELRDAAMLGKLQTGAADAVPARAAVEMATAGGAAALGFDSGRIEVGANADLAVVDFDAPHLTPVHDHVSHLAYAATGQDVRHTICDGEVLMRDREVLPFDEAAVREQAAQRASELAARAGE.

His61 and His63 together coordinate Zn(2+). Residues Glu90 and His183 each coordinate substrate. Residue His210 coordinates Zn(2+). 2 residues coordinate substrate: Glu213 and Asp298. Asp298 serves as a coordination point for Zn(2+).

It belongs to the metallo-dependent hydrolases superfamily. MTA/SAH deaminase family. Requires Zn(2+) as cofactor.

It carries out the reaction S-adenosyl-L-homocysteine + H2O + H(+) = S-inosyl-L-homocysteine + NH4(+). The enzyme catalyses S-methyl-5'-thioadenosine + H2O + H(+) = S-methyl-5'-thioinosine + NH4(+). Catalyzes the deamination of 5-methylthioadenosine and S-adenosyl-L-homocysteine into 5-methylthioinosine and S-inosyl-L-homocysteine, respectively. Is also able to deaminate adenosine. This chain is 5-methylthioadenosine/S-adenosylhomocysteine deaminase, found in Halobacterium salinarum (strain ATCC 700922 / JCM 11081 / NRC-1) (Halobacterium halobium).